A 378-amino-acid polypeptide reads, in one-letter code: Alkaline elastase YaB (378 aa).

The signal sequence occupies residues 1-27; the sequence is MNKKMGKIVAGTALIISVAFSSSIAQA. Residues 28 to 110 constitute a propeptide that is removed on maturation; the sequence is AEEAKEKYLI…IEEDAEVTTM (83 aa). Glutamine 111 is a binding site for Ca(2+). The Peptidase S8 domain maps to 114-377; the sequence is PWGINRVQAP…SGLVNAEAAT (264 aa). Aspartate 141 (charge relay system) is an active-site residue. Residue aspartate 149 coordinates Ca(2+). Catalysis depends on histidine 171, which acts as the Charge relay system. Ca(2+) contacts are provided by leucine 182, asparagine 184, isoleucine 186, valine 188, alanine 272, tyrosine 274, and alanine 277. Residue serine 324 is the Charge relay system of the active site.

The protein belongs to the peptidase S8 family. Ca(2+) serves as cofactor.

The protein resides in the secreted. Digests elastin efficiently, has a substrate preference for Ala in P1 position. In Bacillus sp. (strain YaB), this protein is Alkaline elastase YaB (ale).